Consider the following 342-residue polypeptide: uncharacterized protein (342 aa).

This sequence belongs to the cycloisomerase 2 family.

This is an uncharacterized protein from Staphylococcus aureus (strain MSSA476).